We begin with the raw amino-acid sequence, 132 residues long: Agouti-signaling protein (132 aa).

The N-terminal stretch at 1-22 (MDVTRLLLATLLVFLCFFAAYS) is a signal peptide. An N-linked (GlcNAc...) asparagine glycan is attached at N39. The tract at residues 61–93 (KISRKEAEKKRSSKKEASKQKVARPRTPLSVPC) is disordered. Over residues 64–79 (RKEAEKKRSSKKEASK) the composition is skewed to basic and acidic residues. Disulfide bonds link C93–C108, C100–C114, C107–C125, C111–C132, and C116–C123. Positions 93–132 (CVSTRGSCKPPAPACCHPCASCQCRFFRSACSCRVLNVNC) constitute an Agouti domain.

The protein resides in the secreted. Involved in the regulation of melanogenesis. The binding of ASP to MC1R precludes alpha-MSH initiated signaling and thus blocks production of cAMP, leading to a down-regulation of eumelanogenesis (brown/black pigment) and thus increasing synthesis of pheomelanin (yellow/red pigment). This is Agouti-signaling protein (ASIP) from Callithrix geoffroyi (Geoffroy's marmoset).